Consider the following 520-residue polypeptide: Membrane-bound glycerophospholipid O-acyltransferase 2 (520 aa).

The next 6 membrane-spanning stretches (helical) occupy residues 22–42 (PIDQ…AIWF), 61–81 (TLLG…HFLV), 88–108 (CIMI…FALG), 184–204 (FMGI…FIEG), 237–257 (LLVC…LPVE), and 264–284 (FQAT…LLAA). Active-site residues include N342 and H373. 3 helical membrane passes run 366-386 (FILS…FLTG), 416-436 (VITW…FVLL), and 444-464 (FYSS…LLLP).

It belongs to the membrane-bound acyltransferase family. As to expression, expressed in neutrophils.

The protein localises to the endoplasmic reticulum membrane. It catalyses the reaction a 1-acyl-sn-glycero-3-phosphocholine + an acyl-CoA = a 1,2-diacyl-sn-glycero-3-phosphocholine + CoA. The enzyme catalyses a 1-acyl-sn-glycero-3-phosphoethanolamine + an acyl-CoA = a 1,2-diacyl-sn-glycero-3-phosphoethanolamine + CoA. It carries out the reaction a 1-acyl-sn-glycero-3-phosphate + an acyl-CoA = a 1,2-diacyl-sn-glycero-3-phosphate + CoA. The catalysed reaction is (9Z)-hexadecenoyl-CoA + 1-hexadecanoyl-sn-glycero-3-phosphocholine = 1-hexadecanoyl-2-(9Z-hexadecenoyl)-sn-glycero-3-phosphocholine + CoA. It catalyses the reaction 1-hexadecanoyl-sn-glycero-3-phosphoethanolamine + (9Z)-octadecenoyl-CoA = 1-hexadecanoyl-2-(9Z-octadecenoyl)-sn-glycero-3-phosphoethanolamine + CoA. The enzyme catalyses 1-hexadecanoyl-sn-glycero-3-phosphoethanolamine + (9Z)-hexadecenoyl-CoA = 1-hexadecanoyl-2-(9Z)-hexadecenoyl-sn-glycero-3-phosphoethanolamine + CoA. It carries out the reaction 1-(9Z-octadecenoyl)-sn-glycero-3-phospho-L-serine + hexadecanoyl-CoA = 1-(9Z)-octadecenoyl-2-hexadecanoyl-sn-glycero-3-phosphoserine + CoA. The catalysed reaction is (9Z,12Z)-octadecadienoyl-CoA + 1-hexadecanoyl-sn-glycero-3-phosphocholine = 1-hexadecanoyl-2-(9Z,12Z-octadecadienoyl)-sn-glycero-3-phosphocholine + CoA. It catalyses the reaction 1-hexadecanoyl-sn-glycero-3-phosphocholine + (9Z)-octadecenoyl-CoA = 1-hexadecanoyl-2-(9Z-octadecenoyl)-sn-glycero-3-phosphocholine + CoA. The enzyme catalyses 1-hexadecanoyl-sn-glycero-3-phosphate + (9Z)-hexadecenoyl-CoA = 1-hexadecanoyl-2-[(9Z)-hexadec-9-enoyl]-sn-glycero-3-phosphate + CoA. It carries out the reaction 1-hexadecanoyl-sn-glycero-3-phosphate + (9Z)-octadecenoyl-CoA = 1-hexadecanoyl-2-(9Z-octadecenoyl)-sn-glycero-3-phosphate + CoA. The catalysed reaction is a 1-O-(1Z-alkenyl)-sn-glycero-3-phosphocholine + (9Z)-octadecenoyl-CoA = 1-O-(1Z)-alkenyl-2-(9Z)-octadecenoyl-sn-glycero-3-phosphocholine + CoA. It catalyses the reaction a 1-O-(1Z-alkenyl)-sn-glycero-3-phosphoethanolamine + (9Z)-octadecenoyl-CoA = 1-O-(1Z)-alkenyl-2-(9Z)-octadecenoyl-sn-glycero-3-phosphoethanolamine + CoA. The enzyme catalyses 1-octadecanoyl-sn-glycero-3-phosphoethanolamine + (9Z)-octadecenoyl-CoA = 1-octadecanoyl-2-(9Z-octadecenoyl)-sn-glycero-3-phosphoethanolamine + CoA. It carries out the reaction 1-octadecanoyl-sn-glycero-3-phosphocholine + (9Z)-octadecenoyl-CoA = 1-octadecanoyl-2-(9Z-octadecenoyl)-sn-glycero-3-phosphocholine + CoA. The catalysed reaction is 1-(9Z-octadecenoyl)-sn-glycero-3-phosphoethanolamine + (9Z)-octadecenoyl-CoA = 1,2-di-(9Z-octadecenoyl)-sn-glycero-3-phosphoethanolamine + CoA. The protein operates within lipid metabolism; phospholipid metabolism. With respect to regulation, partially inhibited by thimerosal. Its function is as follows. Acyltransferase which catalyzes the transfer of an acyl group from an acyl-CoA to a lysophospholipid leading to the production of a phospholipid and participates in the reacylation step of the phospholipid remodeling pathway also known as the Lands cycle. Catalyzes preferentially the acylation of lysophosphatidylethanolamine (1-acyl-sn-glycero-3-phosphoethanolamine or LPE) and lysophosphatidic acid (LPA) and to a lesser extend lysophosphatidylcholine (LPC) and lysophosphatidylserine (LPS). Prefers oleoyl-CoA as the acyl donor. May be involved in chondrocyte differentiation. The sequence is that of Membrane-bound glycerophospholipid O-acyltransferase 2 from Homo sapiens (Human).